An 809-amino-acid polypeptide reads, in one-letter code: MASVPTHQSEKEKKNDELSTAILKDKVKPNRLIVDQSEQDDNSVIAVSQAKMDELGLFRGDAVILKGKKRKESVAIIVSDESCPNEKVRMNRVVRNNLRIRLGDVVSITPAPNLSYGTRIHVLPIDDTIEGLTGNLFDVFLKPYFLEAYRPLHKGDIFTVQAAMRTVEFKVVETEPAPACIVSPDTMIHYEGDPIKREEEEESMNDIGYDDLGGVRKQLAQIKEMVELPLRHPQLFKAIGIKPPRGILLFGPPGTGKTLIARAVANETGSFFFLINGPEVMSKMSGESESNLRKAFEECEKNQPAILFIDEIDAIAPKREKTNGEVERRIVSQLLTLMDGVKGRSNLVVIAATNRPNSIDGALRRFGRFDREIDIGIPDAVGRLEILRIHTKNMKLADDVDLEQIANECHGFVGADLASLCSEAALQQIREKMELIDLEDDQIDAEVLNSLAVTMENFRFAQGKSSPSALREAVVETPNTTWSDIGGLQNVKRELQELVQYPVEHPEKYLKFGMQPSRGVLFYGPPGCGKTLLAKAIANECQANFISIKGPELLTMWFGESEANVRDVFDKARAAAPCVLFFDELDSIAKARGGGAGGDGGGASDRVINQVLTEMDGMNAKKNVFIIGATNRPDIIDPAVLRPGRLDQLIYIPLPDEASRHQILKASLRKTPLSKDLDLTFLAKNTVGFSGADLTEICQRACKLAIRESIEKEIRIEKERQDRQARGEELMEDDAVDPVPEITRAHFEEAMKFARRSVTDNDIRKYEMFAQTLQQSRGFGNNFKFPGEQRGSDAPSAPVPAQDDDDLYN.

The interval methionine 1–alanine 21 is disordered. The segment covering glutamine 8–alanine 21 has biased composition (basic and acidic residues). Residues proline 253–leucine 259, asparagine 354, histidine 390, and glycine 527–leucine 532 contribute to the ATP site. Positions phenylalanine 779–asparagine 809 are disordered. The interval aspartate 803–asparagine 809 is interaction with ufd-2.

This sequence belongs to the AAA ATPase family. CDC48 subfamily. As to quaternary structure, homohexamer; oligomerization is ATP-independent. Forms a ring-shaped particle of 18.3 nm diameter, that displays 6-fold radial symmetry. Interacts with cdc-48.2 and thus may form heterohexamers. Forms a complex composed of cdc-48.1, him-6 and crp-1; within the complex, interacts with helicase him-6 and GTPase crp-1. Forms a complex composed of deubiquitinating enzyme atx-3, adapter ubxn-5 and cdc-48.1; within the complex, interacts (via N-terminus) with ubxn-5 and with atx-3. Forms a complex composed of deubiquitinating enzyme atx-3, E4 ubiquitin-protein ligase ufd-2 and cdc-48.1; within the complex, interacts with atx-3 and (via DDDLYN motif) with ufd-2. Interacts (via N-terminus) with atx-3 (via RRDR motif); the interaction is not required for atx-3 enzymatic activity. Forms a complex composed of cdc-48.1, myosin chaperone unc-45, ubiquitin-protein ligases ufd-2 and chn-1; within the complex, interacts (via DDDLYN motif) with ufd-2 and targets myosin chaperone unc-45 for proteasomal degradation. Forms a complex composed of ubxn-3, ufd-1, npl-4.1 and cdc-48.1; within the complex, interacts (via N-terminus) with ubxn-3 (via FPK motif) and with ufd-1. Forms a complex composed of ubxn-3, cdc-48.1 and/or cdc-48.2 and substrate cdt-1. Interacts (via N-terminus) with ubxn-1. Interacts (via N-terminus) with ubxn-2. Interacts (via N-terminus) with ubxn-4. Interacts with ubxn-6. Interacts with ufd-3. Does not interact with air-2. As to expression, expressed in germ cells and spermatheca. Expressed in body wall muscles.

It localises to the cytoplasm. Its subcellular location is the perinuclear region. It carries out the reaction ATP + H2O = ADP + phosphate + H(+). Its activity is regulated as follows. The first ATP-binding region has low ATPase activity. The second ATP-binding region is responsible for ATPase activity. ATP binding to the first ATP-binding region induces intrinsic activity of the second ATP-binding region. While ATP binding to the first ATP-binding region appears to prevent ATP hydrolysis by the second ATP-binding region, ADP-binding to first region promotes the coordinate and cooperative ATPase cycle of the second ATP-binding region. ATP binding to the first ATP-binding region induces a conformational change, promoting the rotation of the first ATP-binding region relative to the second ATP-binding region in the hexamer. Inhibited by N-ethylmaleimide (NEM). Its function is as follows. ATP-dependent chaperone which probably uses the energy provided by ATP hydrolysis to generate mechanical force to unfold substrate proteins, disassemble protein complexes, and disaggregate protein aggregates. Can also prevent aggregation of unfolded proteins also in an ATP-independent manner. Targets polyubiquitinated proteins for proteasomal degradation by binding to 'Lys-48'-linked polyubiquitin chains. Involved in the cytoplasmic elimination of misfolded proteins exported from the ER. This pathway, known as ERAD, prevents the activation of the unfolded protein response (UPR) caused by the accumulation of misfolded proteins in the ER. In association with helicase him-6 and GTPase crp-1, regulates the unfolded protein response (UPR) following ER stress, probably independently of the ERAD pathway. Together with udf-2 and chn-1, regulates myosin assembly in body wall muscles by targeting myosin chaperone unc-45 for proteasomal degradation. Together with the ufd-1-npl-4 complex, controls the switch from spermatogenesis to oogenesis by regulating E3 ligase cul-2 complex-mediated tra-1 proteasomal degradation. During oocyte meiosis and together with cdc-48.2, required for chromosome condensation at the diakinesis phase in prophase I and for progression of metaphase I. During the first embryonic cell division, regulates DNA replication and thus chromosome segregation and decondensation, and nuclear envelope re-assembly. In S phase and in association with ufd-1, npl-4.1 and/or npl-4.2 and ubxn-3, ensures the degradation of DNA licensing factor cdt-1 after the initiation of DNA replication and thus the disassembly of the DNA replication CMG helicase complex by promoting the dissociation from chromatin of several of its components including cdc-45 and sld-5. Regulates ubxn-3 nuclear localization during S phase. During the first embryonic cell divisions and together with cdc-48.2, regulates the re-assembly of the nuclear envelope after mitosis possibly by inactivating kinase air-2, a component of the chromosomal passenger complex (CPC). However, in another study, cdc-48.1 does not appear to be implicated in the regulation of air-2. The sequence is that of Transitional endoplasmic reticulum ATPase homolog 1 from Caenorhabditis elegans.